Here is a 261-residue protein sequence, read N- to C-terminus: Ribonuclease HII (261 aa).

The 189-residue stretch at 71–259 (KYIAGVDEVG…VKEAKLHFDS (189 aa)) folds into the RNase H type-2 domain. Residues Asp-77, Glu-78, and Asp-169 each coordinate a divalent metal cation.

This sequence belongs to the RNase HII family. Mn(2+) is required as a cofactor. Requires Mg(2+) as cofactor.

The protein resides in the cytoplasm. The catalysed reaction is Endonucleolytic cleavage to 5'-phosphomonoester.. In terms of biological role, endonuclease that specifically degrades the RNA of RNA-DNA hybrids. This Listeria monocytogenes serotype 4a (strain HCC23) protein is Ribonuclease HII.